The sequence spans 529 residues: Peptide chain release factor 3 (529 aa).

The region spanning 10-278 (ARRRTFAIIS…NFVDLAPAPR (269 aa)) is the tr-type G domain. GTP is bound by residues 19-26 (SHPDAGKT), 87-91 (DTPGH), and 141-144 (NKLD).

Belongs to the TRAFAC class translation factor GTPase superfamily. Classic translation factor GTPase family. PrfC subfamily.

It is found in the cytoplasm. Functionally, increases the formation of ribosomal termination complexes and stimulates activities of RF-1 and RF-2. It binds guanine nucleotides and has strong preference for UGA stop codons. It may interact directly with the ribosome. The stimulation of RF-1 and RF-2 is significantly reduced by GTP and GDP, but not by GMP. The chain is Peptide chain release factor 3 from Nitratidesulfovibrio vulgaris (strain ATCC 29579 / DSM 644 / CCUG 34227 / NCIMB 8303 / VKM B-1760 / Hildenborough) (Desulfovibrio vulgaris).